Reading from the N-terminus, the 276-residue chain is Formamidopyrimidine-DNA glycosylase (276 aa).

Pro-2 acts as the Schiff-base intermediate with DNA in catalysis. Residue Glu-3 is the Proton donor of the active site. Lys-60 acts as the Proton donor; for beta-elimination activity in catalysis. The DNA site is built by His-93 and Arg-112. The segment at 240–274 (NVYGKKGEPCVTCGTILEKTVVGGRGTHYCPICQP) adopts an FPG-type zinc-finger fold. Arg-264 acts as the Proton donor; for delta-elimination activity in catalysis.

It belongs to the FPG family. As to quaternary structure, monomer. Zn(2+) serves as cofactor.

The enzyme catalyses Hydrolysis of DNA containing ring-opened 7-methylguanine residues, releasing 2,6-diamino-4-hydroxy-5-(N-methyl)formamidopyrimidine.. The catalysed reaction is 2'-deoxyribonucleotide-(2'-deoxyribose 5'-phosphate)-2'-deoxyribonucleotide-DNA = a 3'-end 2'-deoxyribonucleotide-(2,3-dehydro-2,3-deoxyribose 5'-phosphate)-DNA + a 5'-end 5'-phospho-2'-deoxyribonucleoside-DNA + H(+). In terms of biological role, involved in base excision repair of DNA damaged by oxidation or by mutagenic agents. Acts as a DNA glycosylase that recognizes and removes damaged bases. Has a preference for oxidized purines, such as 7,8-dihydro-8-oxoguanine (8-oxoG). Has AP (apurinic/apyrimidinic) lyase activity and introduces nicks in the DNA strand. Cleaves the DNA backbone by beta-delta elimination to generate a single-strand break at the site of the removed base with both 3'- and 5'-phosphates. The sequence is that of Formamidopyrimidine-DNA glycosylase from Bacillus cereus (strain ATCC 10987 / NRS 248).